Here is a 238-residue protein sequence, read N- to C-terminus: Monocyte to macrophage differentiation factor (238 aa).

The Cytoplasmic segment spans residues 1–28 (MRFRNRFQRFMNHRAPANGRYKPTCYEH). A helical membrane pass occupies residues 29–49 (AANCYTHAFLIVPAIVGSALL). The Lumenal portion of the chain corresponds to 50–61 (HRLSDDCWEKIT). The chain crosses the membrane as a helical span at residues 62-82 (AWIYGMGLCALFIVSTVFHIV). Topologically, residues 83-101 (SWKKSHLRTVEHCFHMCDR) are cytoplasmic. A helical transmembrane segment spans residues 102–122 (MVIYFFIAASYAPWLNLRELG). Position 123 (P123) is a topological domain, lumenal. Residues 124-144 (LASHMRWFIWLMAAGGTIYVF) traverse the membrane as a helical segment. At 145–151 (LYHEKYK) the chain is on the cytoplasmic side. Residues 152 to 172 (VVELFFYLTMGFSPALVVTSM) form a helical membrane-spanning segment. Topologically, residues 173 to 174 (NN) are lumenal. The chain crosses the membrane as a helical span at residues 175-195 (TDGLQELACGGLIYCLGVVFF). The Cytoplasmic portion of the chain corresponds to 196-198 (KSD). The helical transmembrane segment at 199–219 (GIIPFAHAIWHLFVATAAAVH) threads the bilayer. The Lumenal segment spans residues 220–238 (YYAIWKYLYRSPTDFIRHL).

It belongs to the ADIPOR family.

It is found in the late endosome membrane. The protein localises to the lysosome membrane. In terms of biological role, involved in the dynamics of lysosomal membranes associated with microglial activation following brain lesion. The polypeptide is Monocyte to macrophage differentiation factor (Mus musculus (Mouse)).